The sequence spans 309 residues: Homoserine O-acetyltransferase (309 aa).

C148 functions as the Acyl-thioester intermediate in the catalytic mechanism. Substrate-binding residues include K169 and S198. The active-site Proton acceptor is H241. Residue E243 is part of the active site. R255 contacts substrate.

It belongs to the MetA family.

It is found in the cytoplasm. It catalyses the reaction L-homoserine + acetyl-CoA = O-acetyl-L-homoserine + CoA. The protein operates within amino-acid biosynthesis; L-methionine biosynthesis via de novo pathway; O-acetyl-L-homoserine from L-homoserine: step 1/1. Its function is as follows. Transfers an acetyl group from acetyl-CoA to L-homoserine, forming acetyl-L-homoserine. In vitro, can also use propionyl-CoA as acyl donor. The protein is Homoserine O-acetyltransferase of Shouchella clausii (Alkalihalobacillus clausii).